We begin with the raw amino-acid sequence, 243 residues long: DNA repair protein RecO (243 aa).

This sequence belongs to the RecO family.

In terms of biological role, involved in DNA repair and RecF pathway recombination. The chain is DNA repair protein RecO from Hyphomonas neptunium (strain ATCC 15444).